A 143-amino-acid polypeptide reads, in one-letter code: Putative pre-16S rRNA nuclease (143 aa).

Belongs to the YqgF nuclease family.

The protein resides in the cytoplasm. Its function is as follows. Could be a nuclease involved in processing of the 5'-end of pre-16S rRNA. This Marinobacter nauticus (strain ATCC 700491 / DSM 11845 / VT8) (Marinobacter aquaeolei) protein is Putative pre-16S rRNA nuclease.